The following is a 278-amino-acid chain: Phosphatidylglycerol--prolipoprotein diacylglyceryl transferase (278 aa).

4 helical membrane passes run 19–39, 49–69, 86–106, and 112–132; these read WYGI…INEG, FIDF…IYYV, IWNG…VLLI, and MLPP…AQVI. Arg134 contributes to the a 1,2-diacyl-sn-glycero-3-phospho-(1'-sn-glycerol) binding site. 3 consecutive transmembrane segments (helical) span residues 174–194, 204–224, and 235–255; these read QPTY…ILSL, GEIF…VEGM, and IRVS…LWIY.

The protein belongs to the Lgt family.

It is found in the cell membrane. The enzyme catalyses L-cysteinyl-[prolipoprotein] + a 1,2-diacyl-sn-glycero-3-phospho-(1'-sn-glycerol) = an S-1,2-diacyl-sn-glyceryl-L-cysteinyl-[prolipoprotein] + sn-glycerol 1-phosphate + H(+). It functions in the pathway protein modification; lipoprotein biosynthesis (diacylglyceryl transfer). In terms of biological role, catalyzes the transfer of the diacylglyceryl group from phosphatidylglycerol to the sulfhydryl group of the N-terminal cysteine of a prolipoprotein, the first step in the formation of mature lipoproteins. This is Phosphatidylglycerol--prolipoprotein diacylglyceryl transferase from Lactobacillus johnsonii (strain CNCM I-12250 / La1 / NCC 533).